Here is a 384-residue protein sequence, read N- to C-terminus: 8-amino-7-oxononanoate synthase (384 aa).

R21 lines the substrate pocket. 108–109 (GF) is a binding site for pyridoxal 5'-phosphate. Residue H133 participates in substrate binding. The pyridoxal 5'-phosphate site is built by S179, H207, and T233. An N6-(pyridoxal phosphate)lysine modification is found at K236. T352 is a binding site for substrate.

It belongs to the class-II pyridoxal-phosphate-dependent aminotransferase family. BioF subfamily. As to quaternary structure, homodimer. The cofactor is pyridoxal 5'-phosphate.

The catalysed reaction is 6-carboxyhexanoyl-[ACP] + L-alanine + H(+) = (8S)-8-amino-7-oxononanoate + holo-[ACP] + CO2. Its pathway is cofactor biosynthesis; biotin biosynthesis. Catalyzes the decarboxylative condensation of pimeloyl-[acyl-carrier protein] and L-alanine to produce 8-amino-7-oxononanoate (AON), [acyl-carrier protein], and carbon dioxide. The protein is 8-amino-7-oxononanoate synthase of Escherichia coli O7:K1 (strain IAI39 / ExPEC).